We begin with the raw amino-acid sequence, 179 residues long: MSGEPGTDIAEVIRSLMREVPDFPEPGVHFKDLTPVLADAYGLAEVSRAIADSARGADLVAGVDARGFLLGGAVAVTLGIGVLAVRKGGKLPPPVLGETYTLEYGSATLEVPADGVELAGRSVVVIDDVLATGGTLAAAHQLLTKAGANVTGAVVMMELTALGGRAAVDPLEVTSLYSV.

This sequence belongs to the purine/pyrimidine phosphoribosyltransferase family. As to quaternary structure, homodimer.

The protein resides in the cytoplasm. It catalyses the reaction AMP + diphosphate = 5-phospho-alpha-D-ribose 1-diphosphate + adenine. It functions in the pathway purine metabolism; AMP biosynthesis via salvage pathway; AMP from adenine: step 1/1. Functionally, catalyzes a salvage reaction resulting in the formation of AMP, that is energically less costly than de novo synthesis. This Mycolicibacterium gilvum (strain PYR-GCK) (Mycobacterium gilvum (strain PYR-GCK)) protein is Adenine phosphoribosyltransferase.